The chain runs to 516 residues: Maturase K (516 aa).

This sequence belongs to the intron maturase 2 family. MatK subfamily.

It localises to the plastid. Its subcellular location is the chloroplast. Functionally, usually encoded in the trnK tRNA gene intron. Probably assists in splicing its own and other chloroplast group II introns. This is Maturase K from Cypripedium calceolus (Yellow lady's slipper).